A 408-amino-acid chain; its full sequence is Potassium channel subfamily K member 13 (408 aa).

Over 1-19 (MAGRGFSWGPGHLNEDNAR) the chain is Cytoplasmic. A helical membrane pass occupies residues 20–40 (FLLLAALIVLYLLGGAAVFSA). Residues Asn-59 and Asn-65 are each glycosylated (N-linked (GlcNAc...) asparagine). The pore-forming intramembrane region spans 95–115 (WDFTGAFYFVGTVVSTIGFGM). 3 residues coordinate K(+): Thr-110, Ile-111, and Gly-112. The tract at residues 110–115 (TIGFGM) is selectivity filter 1. A helical membrane pass occupies residues 125-145 (IFLIFYGLVGCSSTILFFNLF). The Cytoplasmic portion of the chain corresponds to 146–193 (LERLITIIAYIMKSCHQRQLRRRGALPQESLKDAGQCEVDSLAGWKPS). The chain crosses the membrane as a helical span at residues 194–214 (VYYVMLILCTASILISCCASA). An intramembrane region (pore-forming) is located at residues 224–244 (YFDSLYFCFVAFSTIGFGDLV). 4 residues coordinate K(+): Thr-237, Ile-238, Gly-239, and Phe-240. The interval 237-242 (TIGFGD) is selectivity filter 2. A helical membrane pass occupies residues 263–283 (VFILMGVCCIYSLFNVISILI). At 284–408 (KQSLNWILRK…NRLAETSGDR (125 aa)) the chain is on the cytoplasmic side.

The protein belongs to the two pore domain potassium channel (TC 1.A.1.8) family. As to quaternary structure, homodimer. Heterodimer with KCNK12. Expressed in microglia (at protein level).

Its subcellular location is the cell membrane. The enzyme catalyses K(+)(in) = K(+)(out). With respect to regulation, the channel conductance is activated by arachidonic acid and inhibited by Ba(2+) ions, volatile anesthetics such as halothane and antiarrhythmic drugs mexiletine and lidocaine. Insensitive to extracellular pH change. Functionally, k(+) channel that conducts outward rectifying tonic currents potentiated by purinergic signals. Homo- and heterodimerizes to form functional channels with distinct regulatory and gating properties. Contributes most of K(+) currents at the plasma membrane of resting microglia. Maintains a depolarized membrane potential required for proper ramified microglia morphology and phagocytosis, selectively mediating microglial pruning of presynaptic compartments at hippocampal excitatory synapses. Upon local release of ATP caused by neuronal injury or infection, it is potentiated by P2RY12 and P2RX7 receptor signaling and contributes to ATP-triggered K(+) efflux underlying microglial NLRP3 inflammasome assembly and IL1B release. The polypeptide is Potassium channel subfamily K member 13 (Homo sapiens (Human)).